The sequence spans 354 residues: Protein-arginine kinase (354 aa).

Positions 24 to 254 constitute a Phosphagen kinase C-terminal domain; that stretch reads IVLSSRIRLA…QQIIQQEKLA (231 aa). ATP is bound by residues 27–31, His-92, Arg-125, 176–180, and 207–212; these read SSRIR, RASVM, and RGIYGE. Positions 337 to 342 match the RDXXRA motif of the pArg binding pocket involved in allosteric regulation motif; sequence RDYRRA.

The protein belongs to the ATP:guanido phosphotransferase family.

The catalysed reaction is L-arginyl-[protein] + ATP = N(omega)-phospho-L-arginyl-[protein] + ADP + H(+). With respect to regulation, appears to be allosterically activated by the binding of pArg-containing polypeptides to the pArg-binding pocket localized in the C-terminal domain of McsB. In terms of biological role, catalyzes the specific phosphorylation of arginine residues in a large number of proteins. Is part of the bacterial stress response system. Protein arginine phosphorylation has a physiologically important role and is involved in the regulation of many critical cellular processes, such as protein homeostasis, motility, competence, and stringent and stress responses, by regulating gene expression and protein activity. The sequence is that of Protein-arginine kinase from Bacillus cereus (strain B4264).